Reading from the N-terminus, the 761-residue chain is Probable ATP-dependent RNA helicase DDX20 (761 aa).

A Q motif motif is present at residues 26–54; the sequence is VEFSSLLLSKPVLEGLSASGFQRPSPIQL. Residues Arg-48, Gln-53, 70-77, and 73-78 contribute to the ATP site; these read AKSGTGKT and GTGKTC. A Helicase ATP-binding domain is found at 57–231; it reads IPLGRCGLDL…SRYMREPTFV (175 aa). Positions 175–178 match the DEAD box motif; the sequence is DEAD. One can recognise a Helicase C-terminal domain in the interval 266–415; it reads SLLELFSKIP…PIPPGIMEEA (150 aa). Disordered regions lie at residues 428–525 and 570–720; these read PKIP…KSHT and HDAH…EAGQ. The segment covering 443-456 has biased composition (basic and acidic residues); it reads KSEQMKSKPSRESH. Polar residues predominate over residues 498–512; sequence QHDSTITQKQQNNTL. Low complexity-rich tracts occupy residues 600–613 and 623–635; these read SELS…SESS and ESSS…STLE. A compositionally biased stretch (polar residues) spans 655 to 679; it reads TLPSTRVPQQATRSKQKPCQPQSQD. A compositionally biased stretch (basic residues) spans 683 to 707; that stretch reads HHNLPHKHRTASKSSRRPTGPKRRT.

Belongs to the DEAD box helicase family. DDX20 subfamily. As to quaternary structure, part of the core SMN complex.

The protein localises to the cytoplasm. Its subcellular location is the nucleus. The catalysed reaction is ATP + H2O = ADP + phosphate + H(+). It catalyses the reaction a ribonucleoside 5'-triphosphate + H2O = a ribonucleoside 5'-diphosphate + phosphate + H(+). The SMN complex catalyzes the assembly of small nuclear ribonucleoproteins (snRNPs), the building blocks of the spliceosome, and thereby plays an important role in the splicing of cellular pre-mRNAs. Most spliceosomal snRNPs contain a common set of Sm proteins SNRPB, SNRPD1, SNRPD2, SNRPD3, SNRPE, SNRPF and SNRPG that assemble in a heptameric protein ring on the Sm site of the small nuclear RNA to form the core snRNP (Sm core). In the cytosol, the Sm proteins SNRPD1, SNRPD2, SNRPE, SNRPF and SNRPG are trapped in an inactive 6S pICln-Sm complex by the chaperone CLNS1A that controls the assembly of the core snRNP. To assemble core snRNPs, the SMN complex accepts the trapped 5Sm proteins from CLNS1A forming an intermediate. Binding of snRNA inside 5Sm triggers eviction of the SMN complex, thereby allowing binding of SNRPD3 and SNRPB to complete assembly of the core snRNP. May also play a role in the metabolism of small nucleolar ribonucleoprotein (snoRNPs). The polypeptide is Probable ATP-dependent RNA helicase DDX20 (ddx20) (Danio rerio (Zebrafish)).